The sequence spans 607 residues: DNA polymerase (607 aa).

A 3'-5' exonuclease domain is found at M1–D213. Residues V214 to Y607 form a polymerase region.

The protein belongs to the DNA polymerase type-A family.

The catalysed reaction is DNA(n) + a 2'-deoxyribonucleoside 5'-triphosphate = DNA(n+1) + diphosphate. Functionally, replicates viral genomic DNA. This polymerase possesses two enzymatic activities: DNA synthesis (polymerase) and an exonucleolytic activity that degrades single-stranded DNA in the 3'-5' direction. The chain is DNA polymerase (44) from Mycobacterium phage D29 (Mycobacteriophage D29).